The following is a 253-amino-acid chain: Probable transcriptional regulatory protein Synpcc7942_1017 (253 aa).

It belongs to the TACO1 family.

Its subcellular location is the cytoplasm. The protein is Probable transcriptional regulatory protein Synpcc7942_1017 of Synechococcus elongatus (strain ATCC 33912 / PCC 7942 / FACHB-805) (Anacystis nidulans R2).